Consider the following 319-residue polypeptide: Putative peptide permease protein BRA0408/BS1330_II0405 (319 aa).

A run of 6 helical transmembrane segments spans residues 9–29, 102–122, 138–158, 182–202, 242–262, and 284–304; these read LLIG…LLQL, LLLM…TGII, LALL…LYVF, LLRH…ALIM, LPVV…AIFI, and YPVI…VNIL. The 208-residue stretch at 98–305 folds into the ABC transmembrane type-1 domain; sequence IGPTLLLMAA…ACVIIVNILT (208 aa).

Belongs to the binding-protein-dependent transport system permease family. The complex is composed of two ATP-binding proteins (BRA0404 and BRA0405), two transmembrane proteins (BRA0407 and BRA0408) and a solute-binding protein (BRA0409).

The protein resides in the cell inner membrane. Its function is as follows. Probably part of an ABC transporter complex that could be involved in peptide import. Probably responsible for the translocation of the substrate across the membrane. The protein is Putative peptide permease protein BRA0408/BS1330_II0405 of Brucella suis biovar 1 (strain 1330).